The primary structure comprises 222 residues: Superoxide dismutase [Mn], mitochondrial (222 aa).

The transit peptide at 1-24 directs the protein to the mitochondrion; sequence MLCRAACSTSRKLVPALGSLGSRQ. His50 is a binding site for Mn(2+). Tyr58 is modified (3'-nitrotyrosine). 2 positions are modified to N6-acetyllysine; alternate: Lys68 and Lys75. N6-succinyllysine; alternate occurs at positions 68 and 75. Residue His98 participates in Mn(2+) binding. Lys114 is modified (N6-acetyllysine). 2 positions are modified to N6-acetyllysine; alternate: Lys122 and Lys130. N6-succinyllysine; alternate occurs at positions 122 and 130. Mn(2+) contacts are provided by Asp183 and His187. The residue at position 202 (Lys202) is an N6-acetyllysine.

This sequence belongs to the iron/manganese superoxide dismutase family. Homotetramer. Requires Mn(2+) as cofactor. In terms of processing, nitrated under oxidative stress. Nitration coupled with oxidation inhibits the catalytic activity. Post-translationally, acetylation at Lys-122 decreases enzymatic activity. Deacetylated by SIRT3 upon exposure to ionizing radiations or after long fasting. Polyubiquitinated; leading to proteasomal degradation. Deubiquitinated by USP36 which increases protein stability.

It localises to the mitochondrion matrix. The catalysed reaction is 2 superoxide + 2 H(+) = H2O2 + O2. In terms of biological role, destroys superoxide anion radicals which are normally produced within the cells and which are toxic to biological systems. The sequence is that of Superoxide dismutase [Mn], mitochondrial (SOD2) from Equus caballus (Horse).